Here is a 366-residue protein sequence, read N- to C-terminus: Inactive PGL/p-HBAD biosynthesis glycosyltransferase Mb2982c (366 aa).

Disordered regions lie at residues 1–23 (MEET…PNAA) and 295–366 (DGDR…HGGP). The span at 295 to 311 (DGDRGHRWPEPPEERAG) shows a compositional bias: basic and acidic residues.

The protein belongs to the UDP-glycosyltransferase family.

The sequence is that of Inactive PGL/p-HBAD biosynthesis glycosyltransferase Mb2982c from Mycobacterium bovis (strain ATCC BAA-935 / AF2122/97).